The chain runs to 198 residues: UPF0548 protein DR_2035 (198 aa).

This sequence belongs to the UPF0548 family.

In Deinococcus radiodurans (strain ATCC 13939 / DSM 20539 / JCM 16871 / CCUG 27074 / LMG 4051 / NBRC 15346 / NCIMB 9279 / VKM B-1422 / R1), this protein is UPF0548 protein DR_2035.